The primary structure comprises 409 residues: G2/mitotic-specific cyclin-B (409 aa).

Belongs to the cyclin family. Cyclin AB subfamily. In terms of assembly, interacts with the CDK1 protein kinase to form a serine/threonine kinase holoenzyme complex also known as maturation promoting factor (MPF). The cyclin subunit imparts substrate specificity to the complex.

Its function is as follows. Essential for the control of the cell cycle at the G2/M (mitosis) transition. The chain is G2/mitotic-specific cyclin-B from Arbacia punctulata (Punctuate sea urchin).